A 203-amino-acid chain; its full sequence is Proteasome subunit beta 1 (203 aa).

The propeptide at 1 to 7 is removed in mature form; by autocatalysis; it reads MAEKLKG. Residue Thr-8 is the Nucleophile of the active site.

This sequence belongs to the peptidase T1B family. As to quaternary structure, the 20S proteasome core is composed of 14 alpha and 14 beta subunits that assemble into four stacked heptameric rings, resulting in a barrel-shaped structure. The two inner rings, each composed of seven catalytic beta subunits, are sandwiched by two outer rings, each composed of seven alpha subunits. The catalytic chamber with the active sites is on the inside of the barrel. Has a gated structure, the ends of the cylinder being occluded by the N-termini of the alpha-subunits. Is capped at one or both ends by the proteasome regulatory ATPase, PAN.

It is found in the cytoplasm. The enzyme catalyses Cleavage of peptide bonds with very broad specificity.. Its activity is regulated as follows. The formation of the proteasomal ATPase PAN-20S proteasome complex, via the docking of the C-termini of PAN into the intersubunit pockets in the alpha-rings, triggers opening of the gate for substrate entry. Interconversion between the open-gate and close-gate conformations leads to a dynamic regulation of the 20S proteasome proteolysis activity. Component of the proteasome core, a large protease complex with broad specificity involved in protein degradation. This Thermococcus onnurineus (strain NA1) protein is Proteasome subunit beta 1.